A 721-amino-acid polypeptide reads, in one-letter code: Long-chain-fatty-acid--CoA ligase ACSBG1 (721 aa).

Residues 1 to 64 (MPRSSEAGYC…SHGLELSAPE (64 aa)) form a disordered region. Polar residues predominate over residues 26–43 (QQGASMGTSPDNSQTSSL). A phosphoserine mark is found at serine 34, serine 50, serine 53, and serine 70. ATP is bound by residues 279 to 287 (TSGTTGNPK), 469 to 474 (AGYGLS), aspartate 547, and arginine 562. Tyrosine 655 carries the post-translational modification Phosphotyrosine. An ATP-binding site is contributed by lysine 698.

This sequence belongs to the ATP-dependent AMP-binding enzyme family. Bubblegum subfamily. In terms of tissue distribution, present in testis, at a lower level in brain, and at a very low level in ovary. Not detected in other tissues. tested. Present in Leydig cells of the adult testis and to a lesser degree in the seminiferous tubules in spermatogonia and Sertoli cells (at protein level).

It localises to the cytoplasm. Its subcellular location is the cytoplasmic vesicle. The protein localises to the microsome. The protein resides in the endoplasmic reticulum. It is found in the cell membrane. The enzyme catalyses a long-chain fatty acid + ATP + CoA = a long-chain fatty acyl-CoA + AMP + diphosphate. The catalysed reaction is (E)-hexadec-2-enoate + ATP + CoA = (2E)-hexadecenoyl-CoA + AMP + diphosphate. It carries out the reaction hexadecanoate + ATP + CoA = hexadecanoyl-CoA + AMP + diphosphate. Its function is as follows. Catalyzes the conversion of fatty acids such as long-chain and very long-chain fatty acids to their active form acyl-CoAs for both synthesis of cellular lipids, and degradation via beta-oxidation. Can activate diverse saturated, monosaturated and polyunsaturated fatty acids. This is Long-chain-fatty-acid--CoA ligase ACSBG1 from Rattus norvegicus (Rat).